A 211-amino-acid chain; its full sequence is ATP-dependent Clp protease proteolytic subunit (211 aa).

Residue S106 is the Nucleophile of the active site. Residue H131 is part of the active site.

Belongs to the peptidase S14 family. As to quaternary structure, fourteen ClpP subunits assemble into 2 heptameric rings which stack back to back to give a disk-like structure with a central cavity, resembling the structure of eukaryotic proteasomes.

Its subcellular location is the cytoplasm. It carries out the reaction Hydrolysis of proteins to small peptides in the presence of ATP and magnesium. alpha-casein is the usual test substrate. In the absence of ATP, only oligopeptides shorter than five residues are hydrolyzed (such as succinyl-Leu-Tyr-|-NHMec, and Leu-Tyr-Leu-|-Tyr-Trp, in which cleavage of the -Tyr-|-Leu- and -Tyr-|-Trp bonds also occurs).. In terms of biological role, cleaves peptides in various proteins in a process that requires ATP hydrolysis. Has a chymotrypsin-like activity. Plays a major role in the degradation of misfolded proteins. This Rhodopseudomonas palustris (strain BisA53) protein is ATP-dependent Clp protease proteolytic subunit.